Here is a 180-residue protein sequence, read N- to C-terminus: UPF0227 protein ECA1814 (180 aa).

The protein belongs to the UPF0227 family.

The protein is UPF0227 protein ECA1814 of Pectobacterium atrosepticum (strain SCRI 1043 / ATCC BAA-672) (Erwinia carotovora subsp. atroseptica).